Here is a 796-residue protein sequence, read N- to C-terminus: Protein translocase subunit SecA 2 (796 aa).

ATP is bound by residues Gln84, 102–106 (GEGKT), and Asp496.

It belongs to the SecA family. In terms of assembly, monomer and homodimer. Part of the essential Sec protein translocation apparatus which comprises SecA, SecYEG and auxiliary proteins SecDF. Other proteins may also be involved.

It localises to the cell membrane. The protein localises to the cytoplasm. It catalyses the reaction ATP + H2O + cellular proteinSide 1 = ADP + phosphate + cellular proteinSide 2.. In terms of biological role, part of the Sec protein translocase complex. Interacts with the SecYEG preprotein conducting channel. Has a central role in coupling the hydrolysis of ATP to the transfer of proteins into and across the cell membrane, serving as an ATP-driven molecular motor driving the stepwise translocation of polypeptide chains across the membrane. This chain is Protein translocase subunit SecA 2, found in Staphylococcus aureus (strain Mu3 / ATCC 700698).